A 130-amino-acid chain; its full sequence is Small ribosomal subunit protein uS8 (130 aa).

The protein belongs to the universal ribosomal protein uS8 family. In terms of assembly, part of the 30S ribosomal subunit. Contacts proteins S5 and S12.

Functionally, one of the primary rRNA binding proteins, it binds directly to 16S rRNA central domain where it helps coordinate assembly of the platform of the 30S subunit. In Actinobacillus pleuropneumoniae serotype 5b (strain L20), this protein is Small ribosomal subunit protein uS8.